The primary structure comprises 185 residues: dCTP deaminase (185 aa).

DCTP contacts are provided by residues 108–113 (KSTYAR), 132–134 (TLE), glutamine 153, tyrosine 167, and glutamine 177. Glutamate 134 acts as the Proton donor/acceptor in catalysis.

This sequence belongs to the dCTP deaminase family. Homotrimer.

The enzyme catalyses dCTP + H2O + H(+) = dUTP + NH4(+). It functions in the pathway pyrimidine metabolism; dUMP biosynthesis; dUMP from dCTP (dUTP route): step 1/2. Catalyzes the deamination of dCTP to dUTP. This chain is dCTP deaminase, found in Pelagibacter ubique (strain HTCC1062).